Here is a 274-residue protein sequence, read N- to C-terminus: Mitochondrial outer membrane protein porin 1 (274 aa).

The protein belongs to the eukaryotic mitochondrial porin (TC 1.B.8.1) family. As to expression, expressed in shoots and roots. Also expressed in callus, leaves, panicles, sheaths and stems.

The protein localises to the mitochondrion outer membrane. In terms of biological role, forms a channel through the mitochondrial outer membrane that allows diffusion of small hydrophilic molecules. The channel adopts an open conformation at low or zero membrane potential and a closed conformation at potentials above 30-40 mV. The open state has a weak anion selectivity whereas the closed state is cation-selective. The polypeptide is Mitochondrial outer membrane protein porin 1 (VDAC1) (Oryza sativa subsp. japonica (Rice)).